The sequence spans 105 residues: Protein LITTLE ZIPPER 2 (105 aa).

The disordered stretch occupies residues 1 to 20 (MCLTTSEPPFPDTDTPTMRS). Positions 39-60 (NLTRRRRLLKEQKEMEMRNLKL) form a coiled coil.

As to quaternary structure, interacts with REV.

In terms of biological role, competitive inhibitor of the HD-ZIPIII transcription factors in shoot apical meristem (SAM) development. Acts by forming non-functional heterodimers. Part of a negative feedback loop. Essential for proper functioning of stem cells in the SAM. This Arabidopsis thaliana (Mouse-ear cress) protein is Protein LITTLE ZIPPER 2.